Reading from the N-terminus, the 258-residue chain is SLA class II histocompatibility antigen, DQ haplotype D beta chain (258 aa).

The N-terminal stretch at 1–31 is a signal peptide; that stretch reads MVALRLPRGLWTAALTVMLVVLGAPVAEGRD. The beta-1 stretch occupies residues 32–123; it reads SPQDFVVQFK…IEEGTTLQRR (92 aa). The Extracellular portion of the chain corresponds to 32–227; it reads SPQDFVVQFK…RAQSESAQSK (196 aa). 2 disulfide bridges follow: Cys-44–Cys-108 and Cys-146–Cys-202. Asn-48 carries an N-linked (GlcNAc...) asparagine glycan. The segment at 124-217 is beta-2; sequence VQPTVTISPS…SLQSPILVEW (94 aa). In terms of domain architecture, Ig-like C1-type spans 126–230; the sequence is PTVTISPSKA…SESAQSKMLS (105 aa). The interval 218–227 is connecting peptide; that stretch reads RAQSESAQSK. A helical membrane pass occupies residues 228 to 248; it reads MLSGVGGFVLGLIFLGLGLFI. At 249–258 the chain is on the cytoplasmic side; that stretch reads RHRSQKGLVR.

Belongs to the MHC class II family.

The protein resides in the membrane. This chain is SLA class II histocompatibility antigen, DQ haplotype D beta chain, found in Sus scrofa (Pig).